We begin with the raw amino-acid sequence, 266 residues long: Proteasome subunit alpha type-1 (266 aa).

The protein belongs to the peptidase T1A family. As to quaternary structure, the 26S proteasome consists of a 20S proteasome core and two 19S regulatory subunits. The 20S proteasome core is composed of 28 subunits that are arranged in four stacked rings, resulting in a barrel-shaped structure. The two end rings are each formed by seven alpha subunits, and the two central rings are each formed by seven beta subunits. The catalytic chamber with the active sites is on the inside of the barrel.

It localises to the cytoplasm. It is found in the nucleus. Functionally, the proteasome is a multicatalytic proteinase complex which is characterized by its ability to cleave peptides with Arg, Phe, Tyr, Leu, and Glu adjacent to the leaving group at neutral or slightly basic pH. The proteasome has an ATP-dependent proteolytic activity. The polypeptide is Proteasome subunit alpha type-1 (Trypanosoma brucei brucei).